The following is a 478-amino-acid chain: RNA-binding protein 42 (478 aa).

Over residues 1-20 the composition is skewed to low complexity; sequence MASAMAGAGPAPGLPVAGGP. Residues 1 to 33 form a disordered region; it reads MASAMAGAGPAPGLPVAGGPVVPGPGVGIPGKS. A2 is modified (N-acetylalanine). S133 is subject to Phosphoserine. Asymmetric dimethylarginine is present on residues R151, R156, R166, and R179. Disordered stretches follow at residues 171-207 and 317-354; these read LSSA…MLPP and SLRP…PEKL. Over residues 193-205 the composition is skewed to pro residues; the sequence is PPLPGPPGPPMML. The tract at residues 234-478 is necessary for interaction with HNRNPK; it reads ELGLGLGLGL…QKEKKKLGLR (245 aa). Residues 343–354 are compositionally biased toward basic and acidic residues; that stretch reads GEDKKKGKPEKL. The RRM domain occupies 379-457; the sequence is FRIFCGDLGN…RPIKLRKSMW (79 aa).

This sequence belongs to the RRM RBM42 family. In terms of assembly, interacts with HNRNPK. As to expression, expressed in cell lines (at protein level). Expressed in heart, brain, spleen, lung, liver, skeletal muscle, kidney and testis.

The protein resides in the nucleus. It localises to the cytoplasm. Its function is as follows. Binds (via the RRM domain) to the 3'-untranslated region (UTR) of CDKN1A mRNA. This chain is RNA-binding protein 42 (Rbm42), found in Mus musculus (Mouse).